The sequence spans 247 residues: Cell division protein ZapD (247 aa).

The protein belongs to the ZapD family. As to quaternary structure, interacts with FtsZ.

It is found in the cytoplasm. Cell division factor that enhances FtsZ-ring assembly. Directly interacts with FtsZ and promotes bundling of FtsZ protofilaments, with a reduction in FtsZ GTPase activity. In Salmonella dublin (strain CT_02021853), this protein is Cell division protein ZapD.